We begin with the raw amino-acid sequence, 236 residues long: ATP synthase subunit a (236 aa).

Transmembrane regions (helical) follow at residues 17-37, 76-96, 113-133, 170-190, and 196-216; these read WTNLISGTIVFVITFFLLFGL, SFFVFVLFVFLFISNQLGLII, PVVTMTLALCAVTLSHFAGVA, IFGNIYAGELLLKLLAGMAFS, and MIVSLPLEIIWQGFSVFIGAI.

It belongs to the ATPase A chain family. As to quaternary structure, F-type ATPases have 2 components, CF(1) - the catalytic core - and CF(0) - the membrane proton channel. CF(1) has five subunits: alpha(3), beta(3), gamma(1), delta(1), epsilon(1). CF(0) has three main subunits: a(1), b(2) and c(9-12). The alpha and beta chains form an alternating ring which encloses part of the gamma chain. CF(1) is attached to CF(0) by a central stalk formed by the gamma and epsilon chains, while a peripheral stalk is formed by the delta and b chains.

The protein resides in the cell membrane. Key component of the proton channel; it plays a direct role in the translocation of protons across the membrane. The polypeptide is ATP synthase subunit a (Limosilactobacillus fermentum (strain NBRC 3956 / LMG 18251) (Lactobacillus fermentum)).